A 284-amino-acid chain; its full sequence is Pseudopaline exporter CntI (284 aa).

10 consecutive transmembrane segments (helical) span residues 2–22, 34–54, 74–94, 96–116, 122–142, 147–167, 179–199, 209–229, 236–256, and 259–279; these read VLDL…TFSV, LPAA…IYLL, GVMG…IPLA, ASIL…LFLG, AVYW…KPFS, SVYA…SVAI, IVFY…WNDF, GLLL…TRAF, IVAV…WLFW, and VPDA…IALS. EamA domains follow at residues 8 to 138 and 151 to 279; these read SGVL…LMIV and VVGL…IALS.

The protein belongs to the EamA transporter family.

It localises to the cell inner membrane. Functionally, transports the metallophore pseudopaline, which is involved in the acquisition of nickel and zinc, and thus enables bacterial growth inside the host, where metal access is limited. Is probably involved in the export of pseudopaline. Essential for iron acquisition during the interaction with airway mucus secretions (AMS). The protein is Pseudopaline exporter CntI of Pseudomonas aeruginosa (strain ATCC 15692 / DSM 22644 / CIP 104116 / JCM 14847 / LMG 12228 / 1C / PRS 101 / PAO1).